The chain runs to 264 residues: MKLNLQGKTALVTGSTSGIGKAIASSLAEEGAAVIINGRREEKVNQTIDELKTQHAEAVLYPAAFDLGTEEGCNELFQAYPEVDILVNNLGIFEPAEYFDIPDDEWFRFFEVNIMSGVRLTRRYLHNMIEKKEGRVIFIASEAAIMPSQEMAHYSATKTMQLSISRSLAELATGTNVTVNTVMPGSTLTEGVETMLNSLYPGENLTVQEAEARFMKENRPTSIIQRLIRPEEIAHFVTFLSSPLSSAINGAALRADGGLVRSVF.

Position 13 to 20 (13 to 20 (TGSTSGIG)) interacts with NADP(+). Ser-141 provides a ligand contact to substrate. The Proton acceptor role is filled by Tyr-154.

Belongs to the short-chain dehydrogenases/reductases (SDR) family.

This is an uncharacterized protein from Bacillus subtilis (strain 168).